A 74-amino-acid polypeptide reads, in one-letter code: Small ribosomal subunit protein bS20c (74 aa).

It belongs to the bacterial ribosomal protein bS20 family.

The protein resides in the plastid. It localises to the chloroplast. In terms of biological role, binds directly to 16S ribosomal RNA. The sequence is that of Small ribosomal subunit protein bS20c from Cyanidioschyzon merolae (strain NIES-3377 / 10D) (Unicellular red alga).